The primary structure comprises 341 residues: Phosphoribosylformylglycinamidine cyclo-ligase (341 aa).

This sequence belongs to the AIR synthase family.

The protein localises to the cytoplasm. The catalysed reaction is 2-formamido-N(1)-(5-O-phospho-beta-D-ribosyl)acetamidine + ATP = 5-amino-1-(5-phospho-beta-D-ribosyl)imidazole + ADP + phosphate + H(+). It functions in the pathway purine metabolism; IMP biosynthesis via de novo pathway; 5-amino-1-(5-phospho-D-ribosyl)imidazole from N(2)-formyl-N(1)-(5-phospho-D-ribosyl)glycinamide: step 2/2. This Lachnoclostridium phytofermentans (strain ATCC 700394 / DSM 18823 / ISDg) (Clostridium phytofermentans) protein is Phosphoribosylformylglycinamidine cyclo-ligase.